Consider the following 366-residue polypeptide: Lysophosphatidic acid receptor 1-B (366 aa).

The Extracellular portion of the chain corresponds to 1–52; it reads MTSLSEFVSEPIGMMSQTSAASESQCYYNETIAFFYNRSGKYLDTEWNAVSK. 2 cysteine pairs are disulfide-bonded: cysteine 26–cysteine 192 and cysteine 190–cysteine 197. Residues asparagine 29 and asparagine 37 are each glycosylated (N-linked (GlcNAc...) asparagine). Residue lysine 41 participates in a 1-acyl-sn-glycero-3-phosphate binding. A helical membrane pass occupies residues 53-77; sequence LVMGLGITVCIFIMLANLLVMVAIY. Residues 78 to 85 lie on the Cytoplasmic side of the membrane; the sequence is VNRRFHFP. The chain crosses the membrane as a helical span at residues 86 to 109; sequence IYYLMANLAAADFFAGLAYFYLMF. Over 110–123 the chain is Extracellular; that stretch reads NTGPNTRRLTVSTW. A helical membrane pass occupies residues 124–146; the sequence is LLRQGLIDTSLTASVANLLAIAI. An a 1-acyl-sn-glycero-3-phosphate-binding site is contributed by 126–131; the sequence is RQGLID. Over 147 to 165 the chain is Cytoplasmic; it reads ERHITVFRMQLHTRMSNRR. Residues 166 to 186 traverse the membrane as a helical segment; the sequence is VVVVIVVIWTVAIVMGAIPSV. The Extracellular portion of the chain corresponds to 187–206; the sequence is GWNCICDLEHCSNMAPLYSD. The chain crosses the membrane as a helical span at residues 207–227; that stretch reads SYLIFWTIFNLVTFVVMVVLY. Position 212 (tryptophan 212) interacts with a 1-acyl-sn-glycero-3-phosphate. Residues 228-257 lie on the Cytoplasmic side of the membrane; the sequence is AHIFVYVRQRTMRMSRHSSGPRRNRDTMMS. A helical transmembrane segment spans residues 258 to 282; sequence LLKTVVIVLGAFIVCWTPGLVLLLL. At 283 to 296 the chain is on the extracellular side; the sequence is DVCCPQCNILAYEK. Residues cysteine 286 and cysteine 289 are joined by a disulfide bond. The helical transmembrane segment at 297–317 threads the bilayer; sequence FFLLLAEFNSAMNPIIYSYRD. Residues 318–366 lie on the Cytoplasmic side of the membrane; the sequence is KEMSATFKQILCCQRTENVNGPTEGSDRSASSLNHTILAGVHSNDHSVV.

This sequence belongs to the G-protein coupled receptor 1 family. As to expression, expressed at high levels in oocytes and at lower levels in brain and spinal cord. Below detection level in lung, heart, kidney, liver, muscle, stomach, and intestine.

The protein localises to the cell surface. Its subcellular location is the cell membrane. It localises to the endosome. In terms of biological role, receptor for lysophosphatidic acid (LPA). Plays a role in the reorganization of the actin cytoskeleton, cell migration, differentiation and proliferation, and thereby contributes to the responses to tissue damage and infectious agents. Activates downstream signaling cascades via the G(i)/G(o), G(12)/G(13), and G(q) families of heteromeric G proteins. Signaling inhibits adenylyl cyclase activity and decreases cellular cAMP levels. Signaling triggers an increase of cytoplasmic Ca(2+) levels. Signaling leads to the activation of phospholipase C (PLC) and the formation of inositol 1,4,5-trisphosphate. Signaling mediates activation of down-stream MAP kinases. Contributes to the regulation of cell shape. Promotes Rho-dependent reorganization of the actin cytoskeleton in neuronal cells and neurite retraction. Promotes the activation of Rho and the formation of actin stress fibers. Promotes formation of lamellipodia at the leading edge of migrating cells via activation of Rac. Through its function as lysophosphatidic acid receptor, plays a role in chemotaxis and cell migration, including responses to injury and wounding. Promotes cell proliferation in response to lysophosphatidic acid. In Xenopus laevis (African clawed frog), this protein is Lysophosphatidic acid receptor 1-B (lpar1-b).